Here is a 69-residue protein sequence, read N- to C-terminus: DNA-directed RNA polymerase subunit epsilon (69 aa).

Belongs to the RNA polymerase subunit epsilon family. In terms of assembly, RNAP is composed of a core of 2 alpha, a beta and a beta' subunit. The core is associated with a delta subunit, and at least one of epsilon or omega. When a sigma factor is associated with the core the holoenzyme is formed, which can initiate transcription.

It catalyses the reaction RNA(n) + a ribonucleoside 5'-triphosphate = RNA(n+1) + diphosphate. A non-essential component of RNA polymerase (RNAP). In Geobacillus sp. (strain WCH70), this protein is DNA-directed RNA polymerase subunit epsilon.